The following is a 91-amino-acid chain: C-C motif chemokine 5 (91 aa).

The N-terminal stretch at 1-23 (MKVFAAALAVILATATFCTPASA) is a signal peptide. Disulfide bonds link cysteine 33/cysteine 57 and cysteine 34/cysteine 73.

It belongs to the intercrine beta (chemokine CC) family.

It localises to the secreted. Functionally, chemoattractant for blood monocytes, memory T-helper cells and eosinophils. Causes the release of histamine from basophils and activates eosinophils. May activate several chemokine receptors including CCR1, CCR3, CCR4 and CCR5. May also be an agonist of the G protein-coupled receptor GPR75. Together with GPR75, may play a role in neuron survival through activation of a downstream signaling pathway involving the PI3, Akt and MAP kinases. By activating GPR75 may also play a role in insulin secretion by islet cells. In Equus caballus (Horse), this protein is C-C motif chemokine 5 (CCL5).